The chain runs to 250 residues: Isoprenyl transferase (250 aa).

The active site involves D27. D27 contributes to the Mg(2+) binding site. Substrate is bound by residues 28 to 31 (GNRR), W32, H48, and 76 to 78 (STE). Catalysis depends on N79, which acts as the Proton acceptor. Residues F80, R82, R199, and 205–207 (RVS) contribute to the substrate site. E218 serves as a coordination point for Mg(2+).

Belongs to the UPP synthase family. Homodimer. Mg(2+) is required as a cofactor.

Its function is as follows. Catalyzes the condensation of isopentenyl diphosphate (IPP) with allylic pyrophosphates generating different type of terpenoids. This chain is Isoprenyl transferase, found in Chlamydia abortus (strain DSM 27085 / S26/3) (Chlamydophila abortus).